The following is a 359-amino-acid chain: Dual-specificity RNA methyltransferase RlmN (359 aa).

The Proton acceptor role is filled by glutamate 86. Residues 105–338 (EGEKYTICVS…CTIRESKGID (234 aa)) form the Radical SAM core domain. Cysteine 112 and cysteine 343 form a disulfide bridge. [4Fe-4S] cluster is bound by residues cysteine 119, cysteine 123, and cysteine 126. S-adenosyl-L-methionine is bound by residues 169-170 (GE), serine 201, 224-226 (SLH), and asparagine 300. The S-methylcysteine intermediate role is filled by cysteine 343.

The protein belongs to the radical SAM superfamily. RlmN family. Requires [4Fe-4S] cluster as cofactor.

It localises to the cytoplasm. It carries out the reaction adenosine(2503) in 23S rRNA + 2 reduced [2Fe-2S]-[ferredoxin] + 2 S-adenosyl-L-methionine = 2-methyladenosine(2503) in 23S rRNA + 5'-deoxyadenosine + L-methionine + 2 oxidized [2Fe-2S]-[ferredoxin] + S-adenosyl-L-homocysteine. The enzyme catalyses adenosine(37) in tRNA + 2 reduced [2Fe-2S]-[ferredoxin] + 2 S-adenosyl-L-methionine = 2-methyladenosine(37) in tRNA + 5'-deoxyadenosine + L-methionine + 2 oxidized [2Fe-2S]-[ferredoxin] + S-adenosyl-L-homocysteine. Its function is as follows. Specifically methylates position 2 of adenine 2503 in 23S rRNA and position 2 of adenine 37 in tRNAs. m2A2503 modification seems to play a crucial role in the proofreading step occurring at the peptidyl transferase center and thus would serve to optimize ribosomal fidelity. This chain is Dual-specificity RNA methyltransferase RlmN, found in Wolinella succinogenes (strain ATCC 29543 / DSM 1740 / CCUG 13145 / JCM 31913 / LMG 7466 / NCTC 11488 / FDC 602W) (Vibrio succinogenes).